The chain runs to 170 residues: IMPACT family member YDL177C (170 aa).

Residues 79 to 98 (KKKGNKANKSNNSHVNKSRN) form a disordered region.

It belongs to the IMPACT family.

The polypeptide is IMPACT family member YDL177C (Saccharomyces cerevisiae (strain ATCC 204508 / S288c) (Baker's yeast)).